The sequence spans 972 residues: Translation initiation factor IF-2 (972 aa).

Residues His49–Lys63 show a composition bias toward basic and acidic residues. Disordered stretches follow at residues His49–Ile86 and Asp100–Ala383. The span at Gly105–Ala114 shows a compositional bias: low complexity. The segment covering Glu121–Ala177 has biased composition (basic and acidic residues). Residues Lys178–Gln209 show a composition bias toward low complexity. Residues Asp210 to Arg261 are compositionally biased toward basic and acidic residues. A compositionally biased stretch (pro residues) spans Pro277–Pro286. The span at Lys298–Gly327 shows a compositional bias: low complexity. Residues Ser356–Lys369 are compositionally biased toward gly residues. Residues Pro472–Lys641 form the tr-type G domain. Positions Gly481–Thr488 are G1. Gly481 to Thr488 provides a ligand contact to GTP. Residues Gly506–His510 are G2. The interval Asp527–Gly530 is G3. GTP contacts are provided by residues Asp527–His531 and Asn581–Asp584. The interval Asn581 to Asp584 is G4. The segment at Ser617–Lys619 is G5.

This sequence belongs to the TRAFAC class translation factor GTPase superfamily. Classic translation factor GTPase family. IF-2 subfamily.

Its subcellular location is the cytoplasm. One of the essential components for the initiation of protein synthesis. Protects formylmethionyl-tRNA from spontaneous hydrolysis and promotes its binding to the 30S ribosomal subunits. Also involved in the hydrolysis of GTP during the formation of the 70S ribosomal complex. This chain is Translation initiation factor IF-2, found in Burkholderia ambifaria (strain MC40-6).